The sequence spans 262 residues: Taurine import ATP-binding protein TauB (262 aa).

Residues 4–234 (VDHASVFFAA…RFAETGDARS (231 aa)) form the ABC transporter domain. An ATP-binding site is contributed by 39-46 (GASGCGKS).

It belongs to the ABC transporter superfamily. Taurine importer (TC 3.A.1.17.1) family. The complex is composed of two ATP-binding proteins (TauB), two transmembrane proteins (TauC) and a solute-binding protein (TauA).

It is found in the cell inner membrane. It catalyses the reaction taurine(out) + ATP + H2O = taurine(in) + ADP + phosphate + H(+). In terms of biological role, part of the ABC transporter complex TauABC involved in taurine import. Responsible for energy coupling to the transport system. The protein is Taurine import ATP-binding protein TauB of Rhizobium johnstonii (strain DSM 114642 / LMG 32736 / 3841) (Rhizobium leguminosarum bv. viciae).